Here is a 300-residue protein sequence, read N- to C-terminus: Manganese-binding lipoprotein MntA (300 aa).

Positions 1–19 (MKKVCFSFVIMVIALIAAG) are cleaved as a signal peptide. A lipid anchor (N-palmitoyl cysteine) is attached at Cys20. Cys20 carries S-diacylglycerol cysteine lipidation. 4 residues coordinate Mn(2+): His68, His130, Glu196, and Asp271.

It belongs to the bacterial solute-binding protein 9 family.

The protein resides in the cell membrane. In terms of biological role, probably part of ATP-binding cassette (ABC) transport system MntABCD involved in manganese import. Binds manganese and delivers it to the membrane permease for translocation into the cytoplasm. The chain is Manganese-binding lipoprotein MntA (mntA) from Halalkalibacterium halodurans (strain ATCC BAA-125 / DSM 18197 / FERM 7344 / JCM 9153 / C-125) (Bacillus halodurans).